The sequence spans 63 residues: Alpha-conotoxin-like PuSG1.2 (63 aa).

A signal peptide spans 1-21 (MRCLALLVVTLLLFTATATTG). Residues 22 to 43 (ASNGMNAAASGEAPDSISLAVR) constitute a propeptide that is removed on maturation. Intrachain disulfides connect C46–C52 and C47–C60. Residues 48-50 (PDP) are lacks the Ser-Xaa-Pro motif that is crucial for potent interaction with nAChR.

It belongs to the conotoxin A superfamily. In terms of tissue distribution, expressed by the salivary gland.

The protein resides in the secreted. Functionally, alpha-conopeptides-like may act on postsynaptic membranes, they bind to the nicotinic acetylcholine receptors (nAChR) and thus inhibit them. Has possibly a distinct nAChR binding mode from other alpha-conotoxins, due to a different three residue motif (lacks the Ser-Xaa-Pro motif). The protein is Alpha-conotoxin-like PuSG1.2 of Conus pulicarius (Flea-bitten cone).